We begin with the raw amino-acid sequence, 236 residues long: Small ribosomal subunit protein uS3 (236 aa).

Residues 39–107 enclose the KH type-2 domain; it reads IREFLTEELK…DTSLNIVEVR (69 aa). The segment at 214 to 236 is disordered; it reads ASERRAVEGDNQGSSSNRRRENA.

It belongs to the universal ribosomal protein uS3 family. As to quaternary structure, part of the 30S ribosomal subunit. Forms a tight complex with proteins S10 and S14.

In terms of biological role, binds the lower part of the 30S subunit head. Binds mRNA in the 70S ribosome, positioning it for translation. This is Small ribosomal subunit protein uS3 from Brucella canis (strain ATCC 23365 / NCTC 10854 / RM-666).